Here is a 509-residue protein sequence, read N- to C-terminus: ATP synthase subunit alpha (509 aa).

169–176 contributes to the ATP binding site; that stretch reads GDRQTGKT.

This sequence belongs to the ATPase alpha/beta chains family. As to quaternary structure, F-type ATPases have 2 components, CF(1) - the catalytic core - and CF(0) - the membrane proton channel. CF(1) has five subunits: alpha(3), beta(3), gamma(1), delta(1), epsilon(1). CF(0) has three main subunits: a(1), b(2) and c(9-12). The alpha and beta chains form an alternating ring which encloses part of the gamma chain. CF(1) is attached to CF(0) by a central stalk formed by the gamma and epsilon chains, while a peripheral stalk is formed by the delta and b chains.

The protein resides in the cell inner membrane. The enzyme catalyses ATP + H2O + 4 H(+)(in) = ADP + phosphate + 5 H(+)(out). Produces ATP from ADP in the presence of a proton gradient across the membrane. The alpha chain is a regulatory subunit. This Brucella suis biovar 1 (strain 1330) protein is ATP synthase subunit alpha.